Consider the following 102-residue polypeptide: Small ribosomal subunit protein uS10 (102 aa).

It belongs to the universal ribosomal protein uS10 family. Part of the 30S ribosomal subunit.

Functionally, involved in the binding of tRNA to the ribosomes. This is Small ribosomal subunit protein uS10 from Sulfolobus acidocaldarius (strain ATCC 33909 / DSM 639 / JCM 8929 / NBRC 15157 / NCIMB 11770).